The sequence spans 546 residues: 2-isopropylmalate synthase (546 aa).

The region spanning Ile8–Ser271 is the Pyruvate carboxyltransferase domain. Positions 17, 208, 210, and 244 each coordinate Mn(2+). Residues Gln408–Asn546 are regulatory domain.

The protein belongs to the alpha-IPM synthase/homocitrate synthase family. LeuA type 1 subfamily. As to quaternary structure, homodimer. It depends on Mn(2+) as a cofactor.

The protein localises to the cytoplasm. It catalyses the reaction 3-methyl-2-oxobutanoate + acetyl-CoA + H2O = (2S)-2-isopropylmalate + CoA + H(+). The protein operates within amino-acid biosynthesis; L-leucine biosynthesis; L-leucine from 3-methyl-2-oxobutanoate: step 1/4. Catalyzes the condensation of the acetyl group of acetyl-CoA with 3-methyl-2-oxobutanoate (2-ketoisovalerate) to form 3-carboxy-3-hydroxy-4-methylpentanoate (2-isopropylmalate). This is 2-isopropylmalate synthase from Prochlorococcus marinus (strain AS9601).